A 543-amino-acid polypeptide reads, in one-letter code: EH domain-containing protein 2 (543 aa).

Ser-3 and Ser-44 each carry phosphoserine. The Dynamin-type G domain occupies 55 to 286 (FDGKPMVLVA…DLFRDIQGLP (232 aa)). A G1 motif region spans residues 65–72 (GQYSTGKT). 65 to 72 (GQYSTGKT) serves as a coordination point for ATP. The tract at residues 91 to 92 (EP) is G2 motif. The G3 motif stretch occupies residues 153–156 (DTPG). Residues 219–222 (NKAD) form a G4 motif region. Position 220 (Lys-220) interacts with ATP. Residue Val-243 is a region of interest, G5 motif. Residue Trp-258 participates in ATP binding. The segment at 320 to 340 (SVFGKENKKKQLIFKLPVIFA) is mediates membrane-binding. Ser-438, Ser-468, Ser-470, Ser-484, and Ser-493 each carry phosphoserine. The 89-residue stretch at 449–537 (DKSKYDEIFY…RRLVPPSKRR (89 aa)) folds into the EH domain. An EF-hand domain is found at 481 to 516 (LPNSVLGRIWKLSDVDRDGMLDDEEFALASHLIEAK). Residues Asp-494, Asp-496, Asp-498, Met-500, and Glu-505 each contribute to the Ca(2+) site. The tract at residues 521–543 (GLPTNLPRRLVPPSKRRQKGSAE) is disordered. The segment covering 534–543 (SKRRQKGSAE) has biased composition (basic residues).

The protein belongs to the TRAFAC class dynamin-like GTPase superfamily. Dynamin/Fzo/YdjA family. EHD subfamily. As to quaternary structure, homodimer and homooligomer. Interacts with EHD1. May also interact with EHD3 and EHD4. Interacts with MYOF. Interacts with EHBP1. Interacts with FER1L5 (via second C2 domain). Interacts with CAV1 in a cholesterol-dependent manner. Interacts (via EH domain) with PACSIN2 (via NPF motifs); this interaction probably stabilizes the caveolae.

Its subcellular location is the cell membrane. It localises to the membrane. It is found in the caveola. The protein resides in the endosome membrane. The protein localises to the cytoplasm. Its subcellular location is the cytosol. Its activity is regulated as follows. The very low intrinsic ATPase activity is increased upon interaction with liposomes. In terms of biological role, ATP- and membrane-binding protein that controls membrane reorganization/tubulation upon ATP hydrolysis. Plays a role in membrane trafficking between the plasma membrane and endosomes. Important for the internalization of GLUT4. Required for fusion of myoblasts to skeletal muscle myotubes. Required for normal translocation of FER1L5 to the plasma membrane. Regulates the equilibrium between cell surface-associated and cell surface-dissociated caveolae by constraining caveolae at the cell membrane. This Rattus norvegicus (Rat) protein is EH domain-containing protein 2.